The chain runs to 1134 residues: Ovochymase-1 (1134 aa).

Positions 1–22 are cleaved as a signal peptide; that stretch reads MGLLASAGLLLLLVIGHPRSLG. A propeptide spans 23–46 (activation peptide); the sequence is LKCGIRMVNMKSKEPAVGSRFFSR. Residues 38–296 form the Peptidase S1 1 domain; sequence AVGSRFFSRI…LMDFITQNLF (259 aa). An N-linked (GlcNAc...) asparagine glycan is attached at Asn-52. Cys-72 and Cys-88 are joined by a disulfide. His-87 (charge relay system) is an active-site residue. An N-linked (GlcNAc...) asparagine glycan is attached at Asn-99. Glu-116 is a binding site for Ca(2+). The active-site Charge relay system is the Asp-139. 3 disulfides stabilise this stretch: Cys-173–Cys-243, Cys-204–Cys-222, and Cys-233–Cys-262. Catalysis depends on Ser-237, which acts as the Charge relay system. 2 consecutive CUB domains span residues 284–410 and 419–531; these read VSEL…VTAV and CGSL…FTIL. Asn-324 carries an N-linked (GlcNAc...) asparagine glycan. 3 cysteine pairs are disulfide-bonded: Cys-341/Cys-373, Cys-419/Cys-446, and Cys-473/Cys-494. Asn-431 carries an N-linked (GlcNAc...) asparagine glycan. Residue Asn-507 is glycosylated (N-linked (GlcNAc...) asparagine). In terms of domain architecture, Peptidase S1 2 spans 575–812; sequence IAGGEEACPH…FLDWIQSKIN (238 aa). Cys-600 and Cys-616 are disulfide-bonded. Active-site charge relay system residues include His-615 and Asp-664. Cystine bridges form between Cys-698-Cys-769, Cys-729-Cys-747, Cys-759-Cys-788, and Cys-846-Cys-873. The active-site Charge relay system is Ser-763. The CUB 3 domain maps to 846-957; the sequence is CSEAELEKPR…GAFGISYIVL (112 aa). N-linked (GlcNAc...) asparagine glycosylation is present at Asn-1106.

It belongs to the peptidase S1 family.

The protein localises to the secreted. In Homo sapiens (Human), this protein is Ovochymase-1 (OVCH1).